A 220-amino-acid chain; its full sequence is MFAVIKTGGKQYRVAANDTLLIERIAGEVGEIVQIGNVLAVGEGENVTIGAPFVEGASVAAEVVEQGRGPKVIAFKKRRRQNSRRKRGHRQLLTTVRIAEILLDGAKPSKKVAAKPATSEEKAAEEKPAKAKKEAAEKGASPRETKAAPLFSAPEGEPDNLTVIKGIGPVAAGQLKEQGLTTFAQLAALSDEDIARIDEAMPFSTDQIKDWREQAKEVAK.

The segment at Ser-109–Pro-158 is disordered. A compositionally biased stretch (basic and acidic residues) spans Thr-118–Lys-146.

It belongs to the bacterial ribosomal protein bL21 family. Part of the 50S ribosomal subunit. Contacts protein L20.

In terms of biological role, this protein binds to 23S rRNA in the presence of protein L20. The chain is Large ribosomal subunit protein bL21 from Chelativorans sp. (strain BNC1).